The sequence spans 189 residues: Phosphoheptose isomerase (189 aa).

Residues 34 to 189 (AVETLKNGNK…CQIIDNELSH (156 aa)) enclose the SIS domain. 49-51 (NGG) serves as a coordination point for substrate. Zn(2+)-binding residues include His58 and Glu62. Substrate is bound by residues Glu62, 91–92 (ND), 117–119 (STS), Ser122, and Gln169. Zn(2+)-binding residues include Gln169 and His177.

Belongs to the SIS family. GmhA subfamily. Homotetramer. Zn(2+) is required as a cofactor.

It is found in the cytoplasm. The catalysed reaction is 2 D-sedoheptulose 7-phosphate = D-glycero-alpha-D-manno-heptose 7-phosphate + D-glycero-beta-D-manno-heptose 7-phosphate. It participates in carbohydrate biosynthesis; D-glycero-D-manno-heptose 7-phosphate biosynthesis; D-glycero-alpha-D-manno-heptose 7-phosphate and D-glycero-beta-D-manno-heptose 7-phosphate from sedoheptulose 7-phosphate: step 1/1. In terms of biological role, catalyzes the isomerization of sedoheptulose 7-phosphate in D-glycero-D-manno-heptose 7-phosphate. This chain is Phosphoheptose isomerase, found in Aliarcobacter butzleri (strain RM4018) (Arcobacter butzleri).